The following is a 550-amino-acid chain: M-phase inducer phosphatase 1-B (550 aa).

Disordered stretches follow at residues 76–98 and 285–335; these read NLGDETAPLPTESPDRISSGKVE and SPSM…QRRG. A compositionally biased stretch (basic and acidic residues) spans 290–310; sequence EKLDRPMLKRPVRPLDSETPV. The span at 322–335 shows a compositional bias: polar residues; the sequence is LQPQEENFQPQRRG. Residues 401-508 form the Rhodanese domain; sequence LVEKIFIIDC…FFPEYKELCE (108 aa). The active site involves C457.

The protein belongs to the MPI phosphatase family.

The enzyme catalyses O-phospho-L-tyrosyl-[protein] + H2O = L-tyrosyl-[protein] + phosphate. In terms of biological role, tyrosine protein phosphatase which functions as a dosage-dependent inducer of mitotic progression. Directly dephosphorylates CDK1 and stimulates its kinase activity. The protein is M-phase inducer phosphatase 1-B (cdc25-1-b) of Xenopus laevis (African clawed frog).